We begin with the raw amino-acid sequence, 292 residues long: MARTLDGTEISRVMRAEMAQDVAALQAAGVTPGLSVVLVGNNPASQAYVASKTRACESLGMRGQTLTLPEDVSKEALFAVIDRLNADPSVHGILVQLPLPAHLPYKAVLEHIHPAKDVDGFHPVNAGLAFVGDPRAFVPCTPAGIMEMLRREDIPTRGKHVVIVGRSLIVSKPLASLLMAPGPDATVTITHRHTPDLASFTRQADILIVAVGKQNLITADMVKPGVVVIDVGQNRVSDASSPRGYRMVGDVDFDAIQPIASAITPVPGGVGPMTITMLLANTLQAARQTQAR.

Residue 165 to 167 (GRS) coordinates NADP(+).

It belongs to the tetrahydrofolate dehydrogenase/cyclohydrolase family. In terms of assembly, homodimer.

It carries out the reaction (6R)-5,10-methylene-5,6,7,8-tetrahydrofolate + NADP(+) = (6R)-5,10-methenyltetrahydrofolate + NADPH. The enzyme catalyses (6R)-5,10-methenyltetrahydrofolate + H2O = (6R)-10-formyltetrahydrofolate + H(+). The protein operates within one-carbon metabolism; tetrahydrofolate interconversion. Functionally, catalyzes the oxidation of 5,10-methylenetetrahydrofolate to 5,10-methenyltetrahydrofolate and then the hydrolysis of 5,10-methenyltetrahydrofolate to 10-formyltetrahydrofolate. This chain is Bifunctional protein FolD 1, found in Myxococcus xanthus (strain DK1622).